We begin with the raw amino-acid sequence, 91 residues long: MARSLKKGPFVDHHLVAKVEKAVAIKDKKPIKTWSRRSTILPDFIGLTIAVHNGKQHVPVYVTDQMVGHKLGEFALTRTFKGHPADKKAKK.

Belongs to the universal ribosomal protein uS19 family.

Protein S19 forms a complex with S13 that binds strongly to the 16S ribosomal RNA. The polypeptide is Small ribosomal subunit protein uS19 (Methylibium petroleiphilum (strain ATCC BAA-1232 / LMG 22953 / PM1)).